We begin with the raw amino-acid sequence, 1115 residues long: Carbamoyl phosphate synthase large chain (1115 aa).

A carboxyphosphate synthetic domain region spans residues 1 to 407 (MPRRTDLHHV…ALGKVMRSLE (407 aa)). ATP-binding residues include Arg134, Arg174, Gly180, Gly181, Glu213, Ile215, Glu220, Gly246, Val247, His248, Gln290, and Glu304. Positions 138-333 (KDIVAKAGGE…IAKIAAKLAI (196 aa)) constitute an ATP-grasp 1 domain. Gln290, Glu304, and Asn306 together coordinate Mg(2+). Gln290, Glu304, and Asn306 together coordinate Mn(2+). Positions 408-559 (TTRAGFWTAP…ELDPAAETEV (152 aa)) are oligomerization domain. Residues 560–965 (APQTERPKVL…AFAKSQTAAY (406 aa)) are carbamoyl phosphate synthetic domain. One can recognise an ATP-grasp 2 domain in the interval 693-884 (GDLLSAAGLP…LAKACARIML (192 aa)). Residues Arg729, Arg768, Leu770, Glu775, Gly800, Ile801, His802, Ser803, Gln843, and Glu855 each coordinate ATP. Residues Gln843, Glu855, and Asn857 each coordinate Mg(2+). Mn(2+) is bound by residues Gln843, Glu855, and Asn857. In terms of domain architecture, MGS-like spans 966–1113 (GSLPAQGTVF…QELHRVIGGV (148 aa)). Residues 966-1115 (GSLPAQGTVF…LHRVIGGVER (150 aa)) form an allosteric domain region.

Belongs to the CarB family. In terms of assembly, composed of two chains; the small (or glutamine) chain promotes the hydrolysis of glutamine to ammonia, which is used by the large (or ammonia) chain to synthesize carbamoyl phosphate. Tetramer of heterodimers (alpha,beta)4. Requires Mg(2+) as cofactor. The cofactor is Mn(2+).

It catalyses the reaction hydrogencarbonate + L-glutamine + 2 ATP + H2O = carbamoyl phosphate + L-glutamate + 2 ADP + phosphate + 2 H(+). It carries out the reaction hydrogencarbonate + NH4(+) + 2 ATP = carbamoyl phosphate + 2 ADP + phosphate + 2 H(+). Its pathway is amino-acid biosynthesis; L-arginine biosynthesis; carbamoyl phosphate from bicarbonate: step 1/1. The protein operates within pyrimidine metabolism; UMP biosynthesis via de novo pathway; (S)-dihydroorotate from bicarbonate: step 1/3. In terms of biological role, large subunit of the glutamine-dependent carbamoyl phosphate synthetase (CPSase). CPSase catalyzes the formation of carbamoyl phosphate from the ammonia moiety of glutamine, carbonate, and phosphate donated by ATP, constituting the first step of 2 biosynthetic pathways, one leading to arginine and/or urea and the other to pyrimidine nucleotides. The large subunit (synthetase) binds the substrates ammonia (free or transferred from glutamine from the small subunit), hydrogencarbonate and ATP and carries out an ATP-coupled ligase reaction, activating hydrogencarbonate by forming carboxy phosphate which reacts with ammonia to form carbamoyl phosphate. This chain is Carbamoyl phosphate synthase large chain, found in Mycobacterium tuberculosis (strain CDC 1551 / Oshkosh).